Reading from the N-terminus, the 340-residue chain is MRVYYDRDCDVNLIKDMKVAILGYGSQGHAHALNLRDSGAKNLAVALREGSASAAKAEGEGLQVMGIAEAAAWADLIMFTMPDELQAETYKKYVHDNIREGAAIAFAHGLNVHFGLIEPKEGIDVIMMAPKGPGHTVRGEYTKGGGVPCLVAVDKDASGRALEIGLSYCSAIGGGRSGIIETNFREECETDLFGEQAVLCGGLVELIRMGFETLVEAGYAPEMAYFECLHEVKLIVDLIYEGGIANMNYSISNTAEYGEYVSGPRVLPYDETKARMKAILTDIQNGKFVRDFMQENAVGQPHFKATRRINDEHQIEATGETLRGMMPWISAGKMVDKSKN.

The region spanning 1–182 is the KARI N-terminal Rossmann domain; it reads MRVYYDRDCD…GGGRSGIIET (182 aa). NADP(+) is bound by residues 24–27, R48, S51, S53, and 83–86; these read YGSQ and DELQ. H108 is a catalytic residue. G134 is a binding site for NADP(+). Residues 183-329 enclose the KARI C-terminal knotted domain; that stretch reads NFREECETDL…ETLRGMMPWI (147 aa). Mg(2+)-binding residues include D191, E195, E227, and E231. S252 serves as a coordination point for substrate.

It belongs to the ketol-acid reductoisomerase family. It depends on Mg(2+) as a cofactor.

The enzyme catalyses (2R)-2,3-dihydroxy-3-methylbutanoate + NADP(+) = (2S)-2-acetolactate + NADPH + H(+). It catalyses the reaction (2R,3R)-2,3-dihydroxy-3-methylpentanoate + NADP(+) = (S)-2-ethyl-2-hydroxy-3-oxobutanoate + NADPH + H(+). The protein operates within amino-acid biosynthesis; L-isoleucine biosynthesis; L-isoleucine from 2-oxobutanoate: step 2/4. It participates in amino-acid biosynthesis; L-valine biosynthesis; L-valine from pyruvate: step 2/4. Its function is as follows. Involved in the biosynthesis of branched-chain amino acids (BCAA). Catalyzes an alkyl-migration followed by a ketol-acid reduction of (S)-2-acetolactate (S2AL) to yield (R)-2,3-dihydroxy-isovalerate. In the isomerase reaction, S2AL is rearranged via a Mg-dependent methyl migration to produce 3-hydroxy-3-methyl-2-ketobutyrate (HMKB). In the reductase reaction, this 2-ketoacid undergoes a metal-dependent reduction by NADPH to yield (R)-2,3-dihydroxy-isovalerate. The polypeptide is Ketol-acid reductoisomerase (NADP(+)) (Roseobacter denitrificans (strain ATCC 33942 / OCh 114) (Erythrobacter sp. (strain OCh 114))).